The following is a 778-amino-acid chain: Subtilisin-like protease SBT3.6 (778 aa).

Residues 1–22 (MMNYRTSIYVVLSLVIFLNVQR) form the signal peptide. Positions 23-113 (SFVAESSAKR…VIPDSFYKLA (91 aa)) are cleaved as a propeptide — activation peptide. In terms of domain architecture, Inhibitor I9 spans 34-113 (VHIVYLGEKQ…VIPDSFYKLA (80 aa)). N-linked (GlcNAc...) asparagine glycosylation occurs at N69. The Peptidase S8 domain maps to 117–625 (TWDYLGLSAA…GGLVNPEKSA (509 aa)). The Charge relay system role is filled by D147. N158, N180, N202, and N206 each carry an N-linked (GlcNAc...) asparagine glycan. The Charge relay system role is filled by H222. Residues N237, N399, N414, and N541 are each glycosylated (N-linked (GlcNAc...) asparagine). Residues 388–483 (SLVYPENPGN…ELGTDILLYT (96 aa)) enclose the PA domain. S556 acts as the Charge relay system in catalysis. N-linked (GlcNAc...) asparagine glycosylation is found at N648, N724, and N759.

This sequence belongs to the peptidase S8 family.

The protein resides in the secreted. This Arabidopsis thaliana (Mouse-ear cress) protein is Subtilisin-like protease SBT3.6.